Reading from the N-terminus, the 199-residue chain is Small ribosomal subunit protein uS7 (199 aa).

This sequence belongs to the universal ribosomal protein uS7 family. In terms of assembly, part of the 30S ribosomal subunit.

Its function is as follows. One of the primary rRNA binding proteins, it binds directly to 16S rRNA where it nucleates assembly of the head domain of the 30S subunit. Is located at the subunit interface close to the decoding center. This is Small ribosomal subunit protein uS7 from Cenarchaeum symbiosum (strain A).